The chain runs to 492 residues: NAD(P)H-quinone oxidoreductase subunit 2 A, chloroplastic (492 aa).

13 consecutive transmembrane segments (helical) span residues 6–26 (LLLFDGSLIFPECILIFGLIL), 39–59 (ISWFYFISSTSLVMSITALLF), 81–101 (IFQFLILLCSTLCIPLSVEYI), 106–126 (MAITEFLLFILTTTLGGMFLC), 131–151 (LITIFVALECFSLCSYLLSGY), 165–185 (YLLMGGASSSILVHGFSWLYG), 209–229 (PGILIALLFITVGIGFKLSPA), 277–297 (WHLLLEILAILSMILGNLIAI), 305–325 (MLAYSSIGQIGYVIIGIIVGD), 336–356 (YMLFYISMNLGTFACIVSFGL), 377–397 (ALSLALCLLSLGGLPPLAGFF), 400–420 (LHLFWCGWQAGLYFLVSIGLL), and 464–484 (FSMIVCVIASTIPGISMNPII).

The protein belongs to the complex I subunit 2 family. In terms of assembly, NDH is composed of at least 16 different subunits, 5 of which are encoded in the nucleus.

The protein resides in the plastid. Its subcellular location is the chloroplast thylakoid membrane. It catalyses the reaction a plastoquinone + NADH + (n+1) H(+)(in) = a plastoquinol + NAD(+) + n H(+)(out). The enzyme catalyses a plastoquinone + NADPH + (n+1) H(+)(in) = a plastoquinol + NADP(+) + n H(+)(out). Functionally, NDH shuttles electrons from NAD(P)H:plastoquinone, via FMN and iron-sulfur (Fe-S) centers, to quinones in the photosynthetic chain and possibly in a chloroplast respiratory chain. The immediate electron acceptor for the enzyme in this species is believed to be plastoquinone. Couples the redox reaction to proton translocation, and thus conserves the redox energy in a proton gradient. The sequence is that of NAD(P)H-quinone oxidoreductase subunit 2 A, chloroplastic from Phaseolus vulgaris (Kidney bean).